Reading from the N-terminus, the 302-residue chain is Sulfate adenylyltransferase subunit 2 2 (302 aa).

It belongs to the PAPS reductase family. CysD subfamily. Heterodimer composed of CysD, the smaller subunit, and CysN.

The catalysed reaction is sulfate + ATP + H(+) = adenosine 5'-phosphosulfate + diphosphate. It functions in the pathway sulfur metabolism; hydrogen sulfide biosynthesis; sulfite from sulfate: step 1/3. Its function is as follows. With CysN forms the ATP sulfurylase (ATPS) that catalyzes the adenylation of sulfate producing adenosine 5'-phosphosulfate (APS) and diphosphate, the first enzymatic step in sulfur assimilation pathway. APS synthesis involves the formation of a high-energy phosphoric-sulfuric acid anhydride bond driven by GTP hydrolysis by CysN coupled to ATP hydrolysis by CysD. The sequence is that of Sulfate adenylyltransferase subunit 2 2 from Alkalilimnicola ehrlichii (strain ATCC BAA-1101 / DSM 17681 / MLHE-1).